Reading from the N-terminus, the 37-residue chain is Photosystem I reaction center subunit VIII (37 aa).

Residues 7–27 (LPSIFVPLVGLVFPAIAMASL) traverse the membrane as a helical segment.

Belongs to the PsaI family.

It localises to the plastid. The protein resides in the chloroplast thylakoid membrane. Functionally, may help in the organization of the PsaL subunit. The protein is Photosystem I reaction center subunit VIII of Populus alba (White poplar).